The following is a 126-amino-acid chain: MADEIAKAQVARPGGDTIFGKIIRKEIPAKIIYEDDQCLAFHDISPQAPTHFLVIPKKYISQISAAEDDDESLLGHLMIVGKKCAADLGLKKGYRMVVNEGSDGGQSVYHVHLHVLGGRQMNWPPG.

N-acetylalanine is present on Ala-2. The region spanning 18 to 126 is the HIT domain; sequence IFGKIIRKEI…GGRQMNWPPG (109 aa). N6-acetyllysine is present on residues Lys-21 and Lys-30. 43–44 contributes to the AMP binding site; that stretch reads DI. Ser-45 and Ser-72 each carry phosphoserine. AMP is bound by residues Asn-99, 105 to 107, and 112 to 114; these read GQS and HLH. Positions 110–114 match the Histidine triad motif motif; sequence HVHLH. The Tele-AMP-histidine intermediate role is filled by His-112.

It belongs to the HINT family. In terms of assembly, homodimer. Interacts with CDK7. Interacts with RUVBL1 and RUVBL2 and is associated with the LEF1/TCF1-CTNNB1 complex and with a KAT5 histone acetyltransferase complex. Identified in a complex with MITF and CTNNB1. Interacts with CDC34 and RBX1, and is part of a SCF (SKP2-CUL1-F-box protein) E3 ubiquitin-protein ligase complex. Interacts with SUMO1, SUMO2 and RGS17. Interacts with the Ten-1 ICD form of TENM1. Interacts with CALM1; interaction increases in the presence of calcium ions. Widely expressed.

It localises to the cytoplasm. It is found in the nucleus. The catalysed reaction is adenosine 5'-phosphoramidate + H2O = AMP + NH4(+). Functionally, exhibits adenosine 5'-monophosphoramidase activity, hydrolyzing purine nucleotide phosphoramidates with a single phosphate group such as adenosine 5'monophosphoramidate (AMP-NH2) to yield AMP and NH2. Hydrolyzes adenosine 5'monophosphomorpholidate (AMP-morpholidate) and guanosine 5'monophosphomorpholidate (GMP-morpholidate). Hydrolyzes lysyl-AMP (AMP-N-epsilon-(N-alpha-acetyl lysine methyl ester)) generated by lysine tRNA ligase, as well as Met-AMP, His-AMP and Asp-AMP, lysyl-GMP (GMP-N-epsilon-(N-alpha-acetyl lysine methyl ester)) and AMP-N-alanine methyl ester. Can also convert adenosine 5'-O-phosphorothioate and guanosine 5'-O-phosphorothioate to the corresponding nucleoside 5'-O-phosphates with concomitant release of hydrogen sulfide. In addition, functions as a scaffolding protein that modulates transcriptional activation by the LEF1/TCF1-CTNNB1 complex and by the complex formed with MITF and CTNNB1. Modulates p53/TP53 levels and p53/TP53-mediated apoptosis. Modulates proteasomal degradation of target proteins by the SCF (SKP2-CUL1-F-box protein) E3 ubiquitin-protein ligase complex. Also exhibits SUMO-specific isopeptidase activity, deconjugating SUMO1 from RANGAP1 and RGS17. This chain is Adenosine 5'-monophosphoramidase HINT1 (HINT1), found in Bos taurus (Bovine).